Consider the following 447-residue polypeptide: Phosphoglucosamine mutase (447 aa).

The Phosphoserine intermediate role is filled by S107. Residues S107, D246, D248, and D250 each contribute to the Mg(2+) site. The residue at position 107 (S107) is a Phosphoserine.

Belongs to the phosphohexose mutase family. The cofactor is Mg(2+). In terms of processing, activated by phosphorylation.

The catalysed reaction is alpha-D-glucosamine 1-phosphate = D-glucosamine 6-phosphate. Its function is as follows. Catalyzes the conversion of glucosamine-6-phosphate to glucosamine-1-phosphate. This is Phosphoglucosamine mutase from Ralstonia nicotianae (strain ATCC BAA-1114 / GMI1000) (Ralstonia solanacearum).